A 303-amino-acid polypeptide reads, in one-letter code: Probable 5-dehydro-4-deoxyglucarate dehydratase (303 aa).

It belongs to the DapA family.

It catalyses the reaction 5-dehydro-4-deoxy-D-glucarate + H(+) = 2,5-dioxopentanoate + CO2 + H2O. It functions in the pathway carbohydrate acid metabolism; D-glucarate degradation; 2,5-dioxopentanoate from D-glucarate: step 2/2. The sequence is that of Probable 5-dehydro-4-deoxyglucarate dehydratase from Acinetobacter baumannii (strain SDF).